The primary structure comprises 404 residues: MELLEEDLTCPICCCLFEDPRVLPCSHSFCKKCLEGILDGNRSPTWRPPFKCPTCRKETVHNGIASLQVNYSLRGIVEKYNRIRVMPRMSQCRVHSGQPLNIFCATDLKLICGFCATTGDHKGHKFCALEEAYEREKLAFEELFRVVEGWKGAEVHSCLESLESAKKKALERVSRDADRVSEYFDKLLRTLEHKRSEILSDLETLKLAVMQTFDPEINRLRSALEEQRRALNIAESFRSLSDPLTFLQQMQDFREKLRVIQGTPLPSRTDMDVSLSALQSFDVKEWDRVRLGQVDKLCAPYESSAYLSSLPPAAAPRFTRVMWRVVLVVCACLPALNFLPSDCLALSFQDKVVALGGFSLPSPGEIVRWLGFCWKEAASICTLLTELCRNCMLDLINTTSDFIS.

An RING-type zinc finger spans residues 10-56; that stretch reads CPICCCLFEDPRVLPCSHSFCKKCLEGILDGNRSPTWRPPFKCPTCR. A B box-type zinc finger spans residues 87–129; the sequence is PRMSQCRVHSGQPLNIFCATDLKLICGFCATTGDHKGHKFCAL. Zn(2+) is bound by residues cysteine 92, histidine 95, cysteine 115, and histidine 121. A helical transmembrane segment spans residues 102–119; sequence IFCATDLKLICGFCATTG. Residues 186–236 are a coiled coil; that stretch reads KLLRTLEHKRSEILSDLETLKLAVMQTFDPEINRLRSALEEQRRALNIAES.

The protein localises to the endoplasmic reticulum membrane. It functions in the pathway protein modification; protein ubiquitination. In terms of biological role, E3 ubiquitin ligase involved in the retrotranslocation and turnover of membrane and secretory proteins from the ER through a set of processes named ER-associated degradation (ERAD). This process acts on misfolded proteins as well as in the regulated degradation of correctly folded proteins. This chain is Tripartite motif-containing 13 (trim13), found in Danio rerio (Zebrafish).